Here is a 146-residue protein sequence, read N- to C-terminus: Prefoldin subunit alpha (146 aa).

This sequence belongs to the prefoldin alpha subunit family. In terms of assembly, heterohexamer of two alpha and four beta subunits.

Its subcellular location is the cytoplasm. Functionally, molecular chaperone capable of stabilizing a range of proteins. Seems to fulfill an ATP-independent, HSP70-like function in archaeal de novo protein folding. The chain is Prefoldin subunit alpha from Methanobrevibacter smithii (strain ATCC 35061 / DSM 861 / OCM 144 / PS).